A 131-amino-acid chain; its full sequence is Small ribosomal subunit protein uS11 (131 aa).

Belongs to the universal ribosomal protein uS11 family. As to quaternary structure, part of the 30S ribosomal subunit. Interacts with proteins S7 and S18. Binds to IF-3.

In terms of biological role, located on the platform of the 30S subunit, it bridges several disparate RNA helices of the 16S rRNA. Forms part of the Shine-Dalgarno cleft in the 70S ribosome. The chain is Small ribosomal subunit protein uS11 from Clostridium acetobutylicum (strain ATCC 824 / DSM 792 / JCM 1419 / IAM 19013 / LMG 5710 / NBRC 13948 / NRRL B-527 / VKM B-1787 / 2291 / W).